A 261-amino-acid chain; its full sequence is SLA class II histocompatibility antigen, DQ haplotype C beta chain (261 aa).

The first 31 residues, 1–31 (MSGMVALRLPRGLWTAALTVMLVVLGAPVAE), serve as a signal peptide directing secretion. The segment at 32 to 126 (GRDSPQDFVF…IEEGTTLQRR (95 aa)) is beta-1. Topologically, residues 32-230 (GRDSPQDFVF…RAQSESAQSK (199 aa)) are extracellular. Disulfide bonds link C47–C111 and C149–C205. N51 carries N-linked (GlcNAc...) asparagine glycosylation. The beta-2 stretch occupies residues 127 to 220 (VQPTVTISPS…SLQNPILVEW (94 aa)). The Ig-like C1-type domain maps to 129 to 233 (PTVTISPSKA…SESAQSKMLS (105 aa)). The interval 221–230 (RAQSESAQSK) is connecting peptide. Residues 231-251 (MLSGVGGFVLGLIFLGLGLFI) traverse the membrane as a helical segment. Residues 252 to 261 (RHRSQKGLVR) lie on the Cytoplasmic side of the membrane.

The protein belongs to the MHC class II family.

Its subcellular location is the membrane. The sequence is that of SLA class II histocompatibility antigen, DQ haplotype C beta chain from Sus scrofa (Pig).